A 643-amino-acid chain; its full sequence is Very long-chain fatty acid transport protein (643 aa).

Residues 1–15 are Cytoplasmic-facing; the sequence is MACMHQAQLYNDLEE. A helical transmembrane segment spans residues 16–36; that stretch reads LLTGPSVPIVAGAAGAAALTA. Topologically, residues 37–138 are extracellular; it reads YINAKYHIAH…AIDGGNSAEH (102 aa). A helical transmembrane segment spans residues 139-159; the sequence is LMLWLALDAIGAATSFLNWNL. Topologically, residues 160–249 are cytoplasmic; that stretch reads TGAGLIHCIK…TGLPKGVFIS (90 aa). Residue 235–246 coordinates ATP; the sequence is YTSGTTGLPKGV. An intramembrane segment occupies 250-318; the sequence is TGRELRTDWS…FWPEVVASEA (69 aa). The Cytoplasmic segment spans residues 319-643; that stretch reads NIIQYVGELG…QGIVDKRIRL (325 aa). Positions 477-525 match the FACS motif; that stretch reads DLWFKSGDMLRQDAEGRVYFVDRLGDTFRWKSENVSTNEVADVMGTFPQ.

The protein belongs to the ATP-dependent AMP-binding enzyme family.

It is found in the lipid droplet. Its subcellular location is the cell membrane. The protein localises to the peroxisome membrane. The protein resides in the peroxisome. The enzyme catalyses a very long-chain fatty acid + ATP + CoA = a very long-chain fatty acyl-CoA + AMP + diphosphate. Acyl-CoA synthetase required for both the import of long chain fatty acids (LCFAs) (C14-C18) and the activation very long chain fatty acids (VLCFAs) (C20-C26) by esterification of the fatty acids into metabolically active CoA-thioesters for subsequent degradation or incorporation into phospholipids. The transport and fatty acyl-CoA synthetase activities are genetically separable and are thus independent activities. Esterifies VLCFAs in the peroxisome matrix. The VLCFAs are actively transported into peroxisomes by a PXA1-PXA2 heterodimeric transporter in the peroxisomal membrane. This Cochliobolus heterostrophus (Southern corn leaf blight fungus) protein is Very long-chain fatty acid transport protein (FAT1).